The chain runs to 512 residues: MGIQAAEISAILKDQIKNFGQEAEVAEIGRVLSVGDGIARVYGLDNVQAGEMVEFPGGIMGMALNLENDNVGVVIFGSDRDIKEGDTVKRTNSIVDVPQGDELLGRVVDGLGNPIDGKGPINAKLRGVADVKAPGIIPRKSVHEPMATGLKAVDSMIPIGRGQRELIIGDRQTGKTAIALDTILNQKSYNDAAGDDESKKLYCVYVAIGQKRSTVAQLVKKLEENGAMEYSIVVAATASDPAPMQFLAPYAATAMAEYFRDNGRHALIIYDDLSKQAVAYRQMSLLLRRPPGREAYPGDVFYLHSRLLERSAKLNEDFGAGSLTALPVIETQGGDVSAFIPTNVISITDGQIFLETELFYQGIRPAVNTGLSVSRVGSSAQTKAMSSVAGPVKLSLAQYREMAAFAQFGSDLDAATQQLLNRGARLTELMKQPQYSPLTNAEIVCVIFAGTNGYLDKVALADVGRWEAGLLQHLRGKHAELLAWITNEDPKIKDDAAGRVKAALDEYAATFA.

Residue 169–176 (GDRQTGKT) coordinates ATP.

It belongs to the ATPase alpha/beta chains family. As to quaternary structure, F-type ATPases have 2 components, CF(1) - the catalytic core - and CF(0) - the membrane proton channel. CF(1) has five subunits: alpha(3), beta(3), gamma(1), delta(1), epsilon(1). CF(0) has three main subunits: a(1), b(2) and c(9-12). The alpha and beta chains form an alternating ring which encloses part of the gamma chain. CF(1) is attached to CF(0) by a central stalk formed by the gamma and epsilon chains, while a peripheral stalk is formed by the delta and b chains.

Its subcellular location is the cell inner membrane. It carries out the reaction ATP + H2O + 4 H(+)(in) = ADP + phosphate + 5 H(+)(out). Its function is as follows. Produces ATP from ADP in the presence of a proton gradient across the membrane. The alpha chain is a regulatory subunit. The chain is ATP synthase subunit alpha from Ruegeria pomeroyi (strain ATCC 700808 / DSM 15171 / DSS-3) (Silicibacter pomeroyi).